Here is a 349-residue protein sequence, read N- to C-terminus: S-adenosylmethionine:tRNA ribosyltransferase-isomerase (349 aa).

Belongs to the QueA family. Monomer.

The protein resides in the cytoplasm. The catalysed reaction is 7-aminomethyl-7-carbaguanosine(34) in tRNA + S-adenosyl-L-methionine = epoxyqueuosine(34) in tRNA + adenine + L-methionine + 2 H(+). It functions in the pathway tRNA modification; tRNA-queuosine biosynthesis. Its function is as follows. Transfers and isomerizes the ribose moiety from AdoMet to the 7-aminomethyl group of 7-deazaguanine (preQ1-tRNA) to give epoxyqueuosine (oQ-tRNA). This Pseudomonas fluorescens (strain SBW25) protein is S-adenosylmethionine:tRNA ribosyltransferase-isomerase.